Here is a 142-residue protein sequence, read N- to C-terminus: Transcription antitermination protein NusB (142 aa).

It belongs to the NusB family.

In terms of biological role, involved in transcription antitermination. Required for transcription of ribosomal RNA (rRNA) genes. Binds specifically to the boxA antiterminator sequence of the ribosomal RNA (rrn) operons. The polypeptide is Transcription antitermination protein NusB (Streptomyces coelicolor (strain ATCC BAA-471 / A3(2) / M145)).